The sequence spans 421 residues: Trimethyllysine dioxygenase, mitochondrial (421 aa).

The transit peptide at 1–15 directs the protein to the mitochondrion; that stretch reads MWCHRLSHLQSRLQD. Lys236 carries the post-translational modification N6-acetyllysine. 3 residues coordinate Fe cation: His242, Asp244, and His389.

This sequence belongs to the gamma-BBH/TMLD family. In terms of assembly, homodimer. Requires Fe(2+) as cofactor. L-ascorbate is required as a cofactor.

Its subcellular location is the mitochondrion matrix. The enzyme catalyses N(6),N(6),N(6)-trimethyl-L-lysine + 2-oxoglutarate + O2 = (3S)-3-hydroxy-N(6),N(6),N(6)-trimethyl-L-lysine + succinate + CO2. It functions in the pathway amine and polyamine biosynthesis; carnitine biosynthesis. Converts trimethyllysine (TML) into hydroxytrimethyllysine (HTML). The protein is Trimethyllysine dioxygenase, mitochondrial (TMLHE) of Bos taurus (Bovine).